The sequence spans 58 residues: Small ribosomal subunit protein bS21 (58 aa).

Belongs to the bacterial ribosomal protein bS21 family.

The sequence is that of Small ribosomal subunit protein bS21 from Synechococcus sp. (strain CC9605).